A 275-amino-acid polypeptide reads, in one-letter code: Seminase (275 aa).

The first 19 residues, 1 to 19 (MKRLLFLFLLAGILINNHA), serve as a signal peptide directing secretion. An N-linked (GlcNAc...) asparagine glycan is attached at Asn-23. The Peptidase S1 domain maps to 44 to 268 (VIGGRVTTNA…VKPFIVKGIK (225 aa)). A disulfide bridge links Cys-70 with Cys-86. Active-site charge relay system residues include His-85 and Asp-131. Cystine bridges form between Cys-194/Cys-210 and Cys-220/Cys-244. Ser-224 functions as the Charge relay system in the catalytic mechanism.

Belongs to the peptidase S1 family. Undergoes cleavage in the male during mating with a cleaved product detected in the ejaculatory duct and/or bulb of males by 8-10 minutes after the start of mating. Further cleavage occurs in the mated female. Produced in the male accessory glands and secreted into seminal fluid.

The protein localises to the secreted. Seminal fluid protease which is required for cleavage and probably also activation of the metalloprotease Semp1. Also required for a number of female post-mating responses independent of Semp1 including egg laying and sperm usage. In Drosophila melanogaster (Fruit fly), this protein is Seminase.